The following is a 339-amino-acid chain: Diguanylate cyclase VdcA (339 aa).

A GGDEF domain is found at 206–339 (QQVSLIMLDI…NLGRNRVMPL (134 aa)). A Mg(2+)-binding site is contributed by D214. 2 residues coordinate substrate: N222 and D231. E257 is a Mg(2+) binding site. Residue E257 is the Proton acceptor of the active site.

It depends on Mg(2+) as a cofactor.

It carries out the reaction 2 GTP = 3',3'-c-di-GMP + 2 diphosphate. The protein operates within purine metabolism; 3',5'-cyclic di-GMP biosynthesis. Functionally, diguanylate cyclase (DGC) that catalyzes the synthesis of cyclic diguanylate (c-di-GMP) via the condensation of 2 GTP molecules. Is involved in the modulation of intracellular c-di-GMP levels. Cyclic-di-GMP is a second messenger which positively regulates biofilm formation and negatively regulates virulence in V.cholerae, and is proposed to play an important role in the transition from persistence in the environment to survival in the host. Overexpression of vdcA results in increased biofilm formation, and reduced motility and virulence. The chain is Diguanylate cyclase VdcA (vdcA) from Vibrio cholerae serotype O1 (strain ATCC 39315 / El Tor Inaba N16961).